We begin with the raw amino-acid sequence, 1235 residues long: Phosphorylase b kinase regulatory subunit alpha, liver isoform (1235 aa).

The segment at 636-655 (FSPDSEPDLGGYLEDSSPQE) is disordered. Phosphoserine occurs at positions 695, 729, and 735. Residues 807-837 (LSELYGKAGLNQEWSLIRYISGLLRKKVEVL) form a calmodulin-binding region. Phosphoserine is present on residues S983, S1015, and S1044. A disordered region spans residues 1033–1060 (SIKSVRSSTPSSPTGTSSTDSGGQHLGW). The span at 1039–1055 (SSTPSSPTGTSSTDSGG) shows a compositional bias: low complexity. The tract at residues 1059–1099 (GWGEQQGQWLRRRRLDGAINRVPVGFYQKVWKILQKCHGLS) is calmodulin-binding. C1232 is lipidated: S-farnesyl cysteine.

It belongs to the phosphorylase b kinase regulatory chain family. In terms of assembly, hexadecamer of 4 heterotetramers, each composed of alpha, beta, gamma, and delta subunits. Alpha (PHKA1 or PHKA2) and beta (PHKB) are regulatory subunits, gamma (PHKG1 or PHKG2) is the catalytic subunit, and delta is calmodulin. Post-translationally, although the final Cys may be farnesylated, the terminal tripeptide is probably not removed, and the C-terminus is not methylated.

Its subcellular location is the cell membrane. The protein operates within glycan biosynthesis; glycogen metabolism. Its activity is regulated as follows. By phosphorylation of various serine residues and by calcium. In terms of biological role, phosphorylase b kinase catalyzes the phosphorylation of serine in certain substrates, including troponin I. The alpha chain may bind calmodulin. This Mus musculus (Mouse) protein is Phosphorylase b kinase regulatory subunit alpha, liver isoform (Phka2).